We begin with the raw amino-acid sequence, 120 residues long: Large ribosomal subunit protein uL18 (120 aa).

It belongs to the universal ribosomal protein uL18 family. As to quaternary structure, part of the 50S ribosomal subunit; part of the 5S rRNA/L5/L18/L25 subcomplex. Contacts the 5S and 23S rRNAs.

Functionally, this is one of the proteins that bind and probably mediate the attachment of the 5S RNA into the large ribosomal subunit, where it forms part of the central protuberance. The chain is Large ribosomal subunit protein uL18 from Treponema denticola (strain ATCC 35405 / DSM 14222 / CIP 103919 / JCM 8153 / KCTC 15104).